We begin with the raw amino-acid sequence, 448 residues long: MSDNVPTIAAVATAPGRGGVGVIRISGKNLLPMAQALCGKTPKPRVATYADFTDADGQAIDSGLLLFFAAPASFTGEDVIELQGHGGPVVMDMLLNRCLELGARLAEPGEFTKRAFLNDKLDLAQAEGVADLIDASSRSAARLALRSLKGDFSRRIHGLVEDLITLRMLVEATLDFPEEDIDFLEAADARGKLDGLRRAVDDVLANAQQGAILREGLNVVLVGAPNVGKSSLLNALAGDEVAIVTDIAGTTRDAVRERILIDGVPVHIVDTAGLRETDDVVERIGIERSRKAVSEADVALVLVDPREGLNEKTRAILDALPSELKRIEIHSKSDLHAHAAGGFGTGAETVIALSAKTGDGLDALKRTLLREAGWQGEGEGLFLARTRHVNALKAAQEELSLAALCGNHQIELFAEHLRLAQVACGEITGEFTADDLLGVIFSRFCIGK.

(6S)-5-formyl-5,6,7,8-tetrahydrofolate is bound by residues Arg24, Glu81, and Lys120. The TrmE-type G domain maps to 216 to 373; it reads GLNVVLVGAP…LKRTLLREAG (158 aa). Position 226 (Asn226) interacts with K(+). Residues 226–231, 245–251, and 270–273 each bind GTP; these read NVGKSS, TDIAGTT, and DTAG. Ser230 contributes to the Mg(2+) binding site. The K(+) site is built by Thr245, Ile247, and Thr250. Thr251 is a Mg(2+) binding site. Residue Lys448 participates in (6S)-5-formyl-5,6,7,8-tetrahydrofolate binding.

This sequence belongs to the TRAFAC class TrmE-Era-EngA-EngB-Septin-like GTPase superfamily. TrmE GTPase family. In terms of assembly, homodimer. Heterotetramer of two MnmE and two MnmG subunits. Requires K(+) as cofactor.

It localises to the cytoplasm. Exhibits a very high intrinsic GTPase hydrolysis rate. Involved in the addition of a carboxymethylaminomethyl (cmnm) group at the wobble position (U34) of certain tRNAs, forming tRNA-cmnm(5)s(2)U34. This chain is tRNA modification GTPase MnmE, found in Neisseria meningitidis serogroup C (strain 053442).